Reading from the N-terminus, the 116-residue chain is Protein Wnt-5(I) (116 aa).

The O-palmitoleoyl serine; by PORCN moiety is linked to residue serine 1. The N-linked (GlcNAc...) asparagine glycan is linked to asparagine 69. Residues cysteine 82 and cysteine 97 are joined by a disulfide bond.

Belongs to the Wnt family. In terms of processing, palmitoleoylation is required for efficient binding to frizzled receptors. Depalmitoleoylation leads to Wnt signaling pathway inhibition.

It localises to the secreted. Its subcellular location is the extracellular space. The protein localises to the extracellular matrix. Ligand for members of the frizzled family of seven transmembrane receptors. Probable developmental protein. May be a signaling molecule which affects the development of discrete regions of tissues. Is likely to signal over only few cell diameters. The sequence is that of Protein Wnt-5(I) (WNT-5(I)) from Eptatretus stoutii (Pacific hagfish).